The sequence spans 69 residues: UPF0437 protein AZC_3451 (69 aa).

It belongs to the UPF0437 family.

This chain is UPF0437 protein AZC_3451, found in Azorhizobium caulinodans (strain ATCC 43989 / DSM 5975 / JCM 20966 / LMG 6465 / NBRC 14845 / NCIMB 13405 / ORS 571).